Here is a 102-residue protein sequence, read N- to C-terminus: Mini zinc finger protein 1 (102 aa).

A compositionally biased stretch (basic residues) spans 1–13; that stretch reads MMKKRQMVIKQRS. Positions 1 to 34 are disordered; that stretch reads MMKKRQMVIKQRSRNSNTSSSWTTTSSSSSSSEI. Over residues 14–32 the composition is skewed to low complexity; sequence RNSNTSSSWTTTSSSSSSS. A ZF-HD dimerization-type; degenerate zinc finger spans residues 39 to 88; the sequence is YVECQKNHAANIGGYAVDGCREFMAAGVEGTVDALRCAACGCHRNFHRKE.

In terms of assembly, homo- and heterodimers. Interacts with ZHD1, ZHD5, ZHD6, ZHD7, ZHD8, ZHD10 and ZHD13. As to expression, mostly expressed in roots and stems, present in siliques and seedlings, and weakly observed in petioles, leaves and flowers.

The protein resides in the cytoplasm. In terms of biological role, inhibits zinc finger homeodomain (ZHD) transcription factors, such as ZHD5, by interacting with them to prevent both their nuclear localization and their DNA-binding properties. Involved in integrating signals from multiple hormones by preventing the expression of genes involved in gibberellic acid (GA), auxin and brassinosteroid signaling and by promoting the expression of abscisic acid (ABA)-responsive genes. Regulates several development aspects, including photomorphogenesis, apical dominance, longevity, flower morphology and fertility, as well as root and stem elongation. Promotes the formation of ectopic shoot meristems on leaf margins. The chain is Mini zinc finger protein 1 (MIF1) from Arabidopsis thaliana (Mouse-ear cress).